Consider the following 768-residue polypeptide: 5-methyltetrahydropteroyltriglutamate--homocysteine methyltransferase (768 aa).

Residues 17 to 20 (RELK) and K117 each bind 5-methyltetrahydropteroyltri-L-glutamate. Residues 442 to 444 (IGS) and E495 each bind L-homocysteine. L-methionine is bound by residues 442–444 (IGS) and E495. Residues 526–527 (RC) and W572 contribute to the 5-methyltetrahydropteroyltri-L-glutamate site. D610 is a binding site for L-homocysteine. D610 lines the L-methionine pocket. E616 contributes to the 5-methyltetrahydropteroyltri-L-glutamate binding site. Residues H653, C655, and E677 each contribute to the Zn(2+) site. The Proton donor role is filled by H706. C738 contacts Zn(2+).

This sequence belongs to the vitamin-B12 independent methionine synthase family. Zn(2+) serves as cofactor.

The enzyme catalyses 5-methyltetrahydropteroyltri-L-glutamate + L-homocysteine = tetrahydropteroyltri-L-glutamate + L-methionine. The protein operates within amino-acid biosynthesis; L-methionine biosynthesis via de novo pathway; L-methionine from L-homocysteine (MetE route): step 1/1. In terms of biological role, catalyzes the transfer of a methyl group from 5-methyltetrahydrofolate to homocysteine resulting in methionine formation. The sequence is that of 5-methyltetrahydropteroyltriglutamate--homocysteine methyltransferase from Bifidobacterium adolescentis (strain ATCC 15703 / DSM 20083 / NCTC 11814 / E194a).